Consider the following 196-residue polypeptide: Alpha-crystallin A chain (196 aa).

An N-acetylmethionine modification is found at M1. The interval 1–63 (MDVTIQHPWF…RTVLDSGISE (63 aa)) is required for complex formation with BFSP1 and BFSP2. Q6 is modified (deamidated glutamine; partial). Position 45 is a phosphoserine (S45). Deamidated glutamine; partial is present on Q50. A sHSP domain is found at 76–185 (HAGNPKNNPI…GHSERAIPVS (110 aa)). 2 positions are modified to N6-acetyllysine: K93 and K122. H123 is a Zn(2+) binding site. N124 is subject to Deamidated asparagine; partial. Zn(2+) contacts are provided by E125 and H130. S145 carries the post-translational modification Phosphoserine. Deamidated asparagine; partial is present on N146. The interval 168–196 (KVQSGLDAGHSERAIPVSREEKPSSAPSS) is disordered. Q170 bears the Deamidated glutamine; partial mark. Basic and acidic residues predominate over residues 176 to 190 (GHSERAIPVSREEKP). Zn(2+) is bound at residue H177. An O-linked (GlcNAc) serine glycan is attached at S185.

Belongs to the small heat shock protein (HSP20) family. Heteromer composed of three CRYAA and one CRYAB subunits. Inter-subunit bridging via zinc ions enhances stability, which is crucial as there is no protein turn over in the lens. Can also form homodimers and homotetramers (dimers of dimers) which serve as the building blocks of homooligomers. Within homooligomers, the zinc-binding motif is created from residues of 3 different molecules. His-123 and Glu-125 from one molecule are ligands of the zinc ion, and His-130 and His-177 residues from additional molecules complete the site with tetrahedral coordination geometry. Part of a complex required for lens intermediate filament formation composed of BFSP1, BFSP2 and CRYAA. Post-translationally, acetylation at Lys-93 may increase chaperone activity. Undergoes age-dependent proteolytical cleavage at the C-terminus.

The protein resides in the cytoplasm. It is found in the nucleus. Contributes to the transparency and refractive index of the lens. Acts as a chaperone, preventing aggregation of various proteins under a wide range of stress conditions. Required for the correct formation of lens intermediate filaments as part of a complex composed of BFSP1, BFSP2 and CRYAA. This Mesocricetus auratus (Golden hamster) protein is Alpha-crystallin A chain (CRYAA).